A 212-amino-acid polypeptide reads, in one-letter code: Ribosome maturation factor RimP (212 aa).

It belongs to the RimP family.

The protein resides in the cytoplasm. Functionally, required for maturation of 30S ribosomal subunits. This is Ribosome maturation factor RimP from Variovorax paradoxus (strain S110).